The sequence spans 744 residues: 4'-phospho-dehydrooxetanocin synthase (744 aa).

One can recognise a B12-binding domain in the interval 119–259 (TVTLVNLCVI…KMLKKELKLD (141 aa)). 6 residues coordinate cob(II)alamin: arginine 135, serine 139, serine 184, glycine 241, glutamate 242, and glutamate 308. The 247-residue stretch at 299-545 (SKFRGALTLE…IVSYMLASME (247 aa)) folds into the Radical SAM core domain. [4Fe-4S] cluster-binding residues include cysteine 313, cysteine 318, and cysteine 321. Residues proline 322, histidine 325, lysine 326, alanine 361, and glutamate 363 each coordinate cob(II)alamin. The S-adenosyl-L-methionine site is built by glutamate 436 and glutamate 545.

This sequence belongs to the radical SAM superfamily. [4Fe-4S] cluster serves as cofactor. Requires cob(II)alamin as cofactor.

The enzyme catalyses dAMP + S-adenosyl-L-methionine = 4'-phospho-dehydrooxetanocin + 5'-deoxyadenosine + L-methionine + H(+). It carries out the reaction AH2 + 2 S-adenosyl-L-methionine = 2 5'-deoxyadenosin-5'-yl radical + 2 L-methionine + A + 2 H(+). The catalysed reaction is 2 5'-deoxyadenosin-5'-yl radical + 2 dAMP + A = 2 4'-phospho-dehydrooxetanocin + 2 5'-deoxyadenosine + AH2. With respect to regulation, requires OxsA for the oxidative ring contraction activity. Activation of OxsB requires its direct interaction with OxsA and is independent of OxsA phosphohydrolase activity. In contrast to ring contraction, methylation does not require the presence of OxsA. Functionally, isomerase involved in the biosynthesis of oxetanocin A (OXT-A), a nucleoside analog with antitumor, antiviral and antibacterial properties. Catalyzes an oxidative ring contraction of dAMP, forming an oxetane aldehyde. In addition, shows methyltransferase activity in vitro and is able to catalyze the radical mediated, stereoselective C2'-methylation of dAMP to form methylated 2'-dAMP. Also catalyzes the demethylation of S-adenosyl-L-methionine (SAM) to S-adenosyl-L-homocysteine (SAH). In Priestia megaterium (Bacillus megaterium), this protein is 4'-phospho-dehydrooxetanocin synthase.